A 345-amino-acid chain; its full sequence is Protein SHI RELATED SEQUENCE 7 (345 aa).

The tract at residues 7–28 (LGGRDHNKQDHHQEKDHNEDKS) is disordered. Residues 9 to 28 (GRDHNKQDHHQEKDHNEDKS) are compositionally biased toward basic and acidic residues. Zn(2+) contacts are provided by C119, C122, C130, C135, C139, and C146. A DNA-binding region (zn(2)-C6 fungal-type; degenerate) is located at residues 119–146 (CQDCGNQAKKDCPHMRCRTCCKSRGFDC). The interval 168–200 (AVLPAKRIRDANSRGGGDDDDDDKEDEKNDSCG) is disordered. Residues 256–259 (IGGH) carry the Required for homo- and heterodimerization motif.

This sequence belongs to the SHI protein family. As to expression, mainly expressed in the filaments of flowers, the shoot apex regions and pollen. Also present in leaves.

It is found in the nucleus. Its function is as follows. Transcription activator that binds DNA on 5'-ACTCTAC-3' and promotes auxin homeostasis-regulating gene expression (e.g. YUC genes), as well as genes affecting stamen development, cell expansion and timing of flowering. Synergistically with other SHI-related proteins, regulates gynoecium, stamen and leaf development in a dose-dependent manner, controlling apical-basal patterning. Promotes style and stigma formation, and influences vascular development during gynoecium development. May also have a role in the formation and/or maintenance of the shoot apical meristem (SAM). Regulates anther dehiscence and floral development. The chain is Protein SHI RELATED SEQUENCE 7 (SRS7) from Arabidopsis thaliana (Mouse-ear cress).